A 498-amino-acid polypeptide reads, in one-letter code: Glycerol kinase (498 aa).

Threonine 12 contributes to the ADP binding site. The ATP site is built by threonine 12, threonine 13, and serine 14. Threonine 12 provides a ligand contact to sn-glycerol 3-phosphate. Arginine 16 contacts ADP. Residues arginine 82, glutamate 83, tyrosine 134, and aspartate 243 each contribute to the sn-glycerol 3-phosphate site. Residues arginine 82, glutamate 83, tyrosine 134, aspartate 243, and glutamine 244 each coordinate glycerol. Residues threonine 265 and glycine 308 each contribute to the ADP site. ATP contacts are provided by threonine 265, glycine 308, glutamine 312, and glycine 412. An ADP-binding site is contributed by glycine 412.

This sequence belongs to the FGGY kinase family.

It catalyses the reaction glycerol + ATP = sn-glycerol 3-phosphate + ADP + H(+). It participates in polyol metabolism; glycerol degradation via glycerol kinase pathway; sn-glycerol 3-phosphate from glycerol: step 1/1. With respect to regulation, inhibited by fructose 1,6-bisphosphate (FBP). Functionally, key enzyme in the regulation of glycerol uptake and metabolism. Catalyzes the phosphorylation of glycerol to yield sn-glycerol 3-phosphate. The polypeptide is Glycerol kinase (Rhizobium rhizogenes (strain K84 / ATCC BAA-868) (Agrobacterium radiobacter)).